Here is a 517-residue protein sequence, read N- to C-terminus: ATP synthase subunit alpha (517 aa).

Position 174-181 (174-181) interacts with ATP; it reads GDRQTGKT.

It belongs to the ATPase alpha/beta chains family. As to quaternary structure, F-type ATPases have 2 components, CF(1) - the catalytic core - and CF(0) - the membrane proton channel. CF(1) has five subunits: alpha(3), beta(3), gamma(1), delta(1), epsilon(1). CF(0) has three main subunits: a(1), b(2) and c(9-12). The alpha and beta chains form an alternating ring which encloses part of the gamma chain. CF(1) is attached to CF(0) by a central stalk formed by the gamma and epsilon chains, while a peripheral stalk is formed by the delta and b chains.

The protein localises to the cell inner membrane. The enzyme catalyses ATP + H2O + 4 H(+)(in) = ADP + phosphate + 5 H(+)(out). Produces ATP from ADP in the presence of a proton gradient across the membrane. The alpha chain is a regulatory subunit. This Delftia acidovorans (strain DSM 14801 / SPH-1) protein is ATP synthase subunit alpha.